Here is a 268-residue protein sequence, read N- to C-terminus: Glucosamine-6-phosphate deaminase (268 aa).

Asp67 acts as the Proton acceptor; for enolization step in catalysis. The active-site For ring-opening step is Asn137. The Proton acceptor; for ring-opening step role is filled by His139. The active-site For ring-opening step is the Glu144.

Belongs to the glucosamine/galactosamine-6-phosphate isomerase family. NagB subfamily. In terms of assembly, homohexamer.

It catalyses the reaction alpha-D-glucosamine 6-phosphate + H2O = beta-D-fructose 6-phosphate + NH4(+). It participates in amino-sugar metabolism; N-acetylneuraminate degradation; D-fructose 6-phosphate from N-acetylneuraminate: step 5/5. Functionally, catalyzes the reversible isomerization-deamination of glucosamine 6-phosphate (GlcN6P) to form fructose 6-phosphate (Fru6P) and ammonium ion. The chain is Glucosamine-6-phosphate deaminase from Pseudoalteromonas translucida (strain TAC 125).